The sequence spans 534 residues: Ulvan lyase NLR42 (534 aa).

An N-terminal signal peptide occupies residues 1-47; that stretch reads MVFFKDLFIFKSLIKGSLYSGHMKKKLLNYLPLFALMLFTVSMMAQT. Cysteines 59 and 89 form a disulfide. 6 residues coordinate Ca(2+): Gly63, Asn68, Asp86, Thr88, Ala91, and Asp92. Tyr164 is a binding site for substrate. Lys169 acts as the Proton acceptor in catalysis. Substrate is bound by residues 218–223 and 288–291; these read SGAAGR and YRVK. Tyr288 serves as the catalytic Proton donor/acceptor. The tract at residues 316–449 is ulvan-binding domain; that stretch reads PAADIYRIKN…SKWNLESTTL (134 aa). The propeptide at 450–534 is removed by the type IX secretion system (T9SS); it reads SVDSQQIASV…KVYQTKLIVN (85 aa).

This sequence belongs to the polysaccharide lyase 28 family. It depends on Ca(2+) as a cofactor.

The protein resides in the secreted. In terms of biological role, ulvan lyase involved in ulvan degradation. Ulvan is the main polysaccharide component of the Ulvales (green seaweed) cell wall. It is composed of disaccharide building blocks comprising 3-sulfated rhamnose (Rha3S) linked to D-glucuronic acid (GlcA), L-iduronic acid (IduA), or D-xylose (Xyl). Ulvan lyase catalyzes the endolytic cleavage of the glycosidic bond between Rha3S and the uronic acids GlcA or IduA, producing oligosaccharides that have unsaturated 4-deoxy-L-threo-hex-4-enopyranosiduronic acid (deltaUA) at the non-reducing end. This results eventually in the degradation of the ulvan polysaccharide into deltaUA-Rha3S disaccharides and deltaUA-Rha3S-Xyl-Rha3S tetrasaccharides. The sequence is that of Ulvan lyase NLR42 from Nonlabens ulvanivorans (Persicivirga ulvanivorans).